Reading from the N-terminus, the 410-residue chain is Phosphoserine phosphatase (410 aa).

The ACT domain occupies 13-91; that stretch reads LVKIFGKDRP…QAEIISGIGD (79 aa). Catalysis depends on aspartate 187, which acts as the Nucleophile. Residues aspartate 187 and aspartate 189 each contribute to the Mg(2+) site. The Proton donor role is filled by aspartate 189. Residues glutamate 196, arginine 232, 275–276, and lysine 320 each bind substrate; that span reads SG. Aspartate 343 lines the Mg(2+) pocket. Asparagine 346 serves as a coordination point for substrate.

Belongs to the HAD-like hydrolase superfamily. SerB family. It depends on Mg(2+) as a cofactor.

It catalyses the reaction O-phospho-L-serine + H2O = L-serine + phosphate. The enzyme catalyses O-phospho-D-serine + H2O = D-serine + phosphate. It participates in amino-acid biosynthesis; L-serine biosynthesis; L-serine from 3-phospho-D-glycerate: step 3/3. Functionally, catalyzes the dephosphorylation of phosphoserine (P-Ser) in vitro. Also catalyzes the dephosphorylation of phosphothreonine (P-Thr) in vitro. The sequence is that of Phosphoserine phosphatase from Streptomyces coelicolor (strain ATCC BAA-471 / A3(2) / M145).